The chain runs to 427 residues: Enolase 2 (427 aa).

Q165 is a binding site for (2R)-2-phosphoglycerate. E207 (proton donor) is an active-site residue. 3 residues coordinate Mg(2+): D244, E287, and D314. (2R)-2-phosphoglycerate contacts are provided by K339, R368, S369, and K390. Residue K339 is the Proton acceptor of the active site.

This sequence belongs to the enolase family. Component of the RNA degradosome, a multiprotein complex involved in RNA processing and mRNA degradation. Mg(2+) is required as a cofactor.

The protein resides in the cytoplasm. It is found in the secreted. Its subcellular location is the cell surface. It catalyses the reaction (2R)-2-phosphoglycerate = phosphoenolpyruvate + H2O. It participates in carbohydrate degradation; glycolysis; pyruvate from D-glyceraldehyde 3-phosphate: step 4/5. Functionally, catalyzes the reversible conversion of 2-phosphoglycerate (2-PG) into phosphoenolpyruvate (PEP). It is essential for the degradation of carbohydrates via glycolysis. The polypeptide is Enolase 2 (Pseudomonas syringae pv. syringae (strain B728a)).